We begin with the raw amino-acid sequence, 245 residues long: tRNA1(Val) (adenine(37)-N6)-methyltransferase (245 aa).

Belongs to the methyltransferase superfamily. tRNA (adenine-N(6)-)-methyltransferase family.

It localises to the cytoplasm. The enzyme catalyses adenosine(37) in tRNA1(Val) + S-adenosyl-L-methionine = N(6)-methyladenosine(37) in tRNA1(Val) + S-adenosyl-L-homocysteine + H(+). In terms of biological role, specifically methylates the adenine in position 37 of tRNA(1)(Val) (anticodon cmo5UAC). This is tRNA1(Val) (adenine(37)-N6)-methyltransferase from Escherichia coli O157:H7 (strain EC4115 / EHEC).